We begin with the raw amino-acid sequence, 467 residues long: Transcription factor bHLH3 (467 aa).

The region spanning 316-365 (EEALNHVEAERQRREKLNQRFYALRAVVPNISKMDKASLLADAITYITDM) is the bHLH domain.

Homodimer.

Its subcellular location is the nucleus. The sequence is that of Transcription factor bHLH3 (BHLH3) from Arabidopsis thaliana (Mouse-ear cress).